Reading from the N-terminus, the 703-residue chain is Peptide transporter CstA (703 aa).

16 helical membrane-spanning segments follow: residues 6–26 (TKIL…YLAL), 29–49 (GESV…MIGY), 87–107 (VLFG…GPIL), 118–138 (LWIL…VLFI), 162–182 (VAMV…AMVV), 190–210 (PWGL…GIYM), 221–241 (ASII…VIAA), 256–276 (LAIV…WFLL), 282–302 (LSTF…VLVA), 319–339 (GPVF…CGAI), 374–394 (AVAI…YFAI), 463–483 (LMAF…LTAV), 514–534 (GLLA…QGAI), 547–567 (FGVS…TILV), 574–594 (YTWV…YGGI), and 660–680 (AILC…CIGI).

This sequence belongs to the peptide transporter carbon starvation (CstA) (TC 2.A.114) family.

It localises to the cell inner membrane. In terms of biological role, involved in the uptake of dipeptides and tripeptides. May influence host-pathogen interactions. Involved in motility and agglutination, and has a role in stimulation of dendritic cells. In Campylobacter jejuni subsp. jejuni serotype O:2 (strain ATCC 700819 / NCTC 11168), this protein is Peptide transporter CstA.